A 243-amino-acid polypeptide reads, in one-letter code: MKQAIESFIQSKKVSVNSQKSYTYDLQQFVTVTKGEISQQSLLVYQQSLLDLKPAAQKRKMSAVNQFLYFLYENNLLDRFYKLQTTSGPASVKKKLEREDLTLLFQESPWLEGQLIALLIAYLGLTPSEIAELTSQQVNLDFQVLTVEKGGAKRVLTLPKELIPYMESHLSGRYVFDKKGQTYSRQWFFNRLTEFVQSIGKPDWTAQKLREQYILKQIDEGKSLDQIAKQLGLKTSMSLEKFR.

Residues 1–72 (MKQAIESFIQ…AVNQFLYFLY (72 aa)) enclose the Core-binding (CB) domain. In terms of domain architecture, Tyr recombinase spans 91–243 (SVKKKLERED…KTSMSLEKFR (153 aa)). Residues K149 and R210 contribute to the active site.

Belongs to the 'phage' integrase family. XerD-like subfamily.

The protein localises to the cytoplasm. Its function is as follows. Putative tyrosine recombinase. Not involved in the cutting and rejoining of the recombining DNA molecules on dif(SL) site. In Streptococcus suis (strain 98HAH33), this protein is Tyrosine recombinase XerD-like.